The chain runs to 397 residues: Ubiquitin-like modifier-activating enzyme 5 (397 aa).

Residues Gly76, Asp97, Lys120, Asn143, and Asn177 each coordinate ATP. Residues Cys219 and Cys222 each contribute to the Zn(2+) site. Cys243 functions as the Glycyl thioester intermediate in the catalytic mechanism. Residues Cys296 and Cys301 each contribute to the Zn(2+) site. Residues 343-384 form a disordered region; that stretch reads PSDAPTDLSQSTDVGQGLRLAYEAPEKSSAEATQAATAPVDD.

The protein belongs to the ubiquitin-activating E1 family. UBA5 subfamily.

Functionally, E1-like enzyme which activates UFM1. This chain is Ubiquitin-like modifier-activating enzyme 5, found in Drosophila pseudoobscura pseudoobscura (Fruit fly).